The sequence spans 772 residues: Putative ribosomal protein S6 kinase alpha-2 (772 aa).

Positions 17–284 (FALLRVLGKG…VDEIKNHKFM (268 aa)) constitute a Protein kinase 1 domain. Residues 23-31 (LGKGAYGKV) and Lys-49 contribute to the ATP site. Catalysis depends on Asp-145, which acts as the Proton acceptor. Phosphoserine; by autocatalysis is present on residues Ser-180, Ser-342, and Ser-347. One can recognise an AGC-kinase C-terminal domain in the interval 285–353 (SSIDWDAAVK…VSPSVIFAND (69 aa)). A Protein kinase 2 domain is found at 382 to 653 (KSDAGLLGKG…MQELTAHMWL (272 aa)). ATP contacts are provided by residues 388 to 396 (LGKGAFSVV) and Lys-411. Asp-500 acts as the Proton acceptor in catalysis. The disordered stretch occupies residues 706 to 772 (RGIKRQSGDK…IRETRGSDSS (67 aa)). Phosphoserine; by autocatalysis is present on Ser-712. Polar residues-rich tracts occupy residues 718-727 (SGNSKNSRVT) and 739-748 (EMTSSTSRPS).

It belongs to the protein kinase superfamily. AGC Ser/Thr protein kinase family. S6 kinase subfamily. Mg(2+) serves as cofactor.

It carries out the reaction L-seryl-[protein] + ATP = O-phospho-L-seryl-[protein] + ADP + H(+). The enzyme catalyses L-threonyl-[protein] + ATP = O-phospho-L-threonyl-[protein] + ADP + H(+). With respect to regulation, activated by multiple phosphorylations on threonine and serine residues. Serine/threonine kinase that may play a role in mediating the mitogen- and stress-induced effects on transcription. May repress transcription via phosphorylation of 'Ser-1' of histone H2A. May phosphorylate histone H3. This is Putative ribosomal protein S6 kinase alpha-2 (rskn-2) from Caenorhabditis elegans.